The following is a 251-amino-acid chain: uncharacterized protein (251 aa).

Residues 3-58 form the HTH deoR-type domain; it reads TPERHQLIIDQIEKHDVVKIQELINLTNASESTIRRDLSTLEERGFLKRVHGGAAK. The H-T-H motif DNA-binding region spans 20–39; sequence VKIQELINLTNASESTIRRD.

This is an uncharacterized protein from Bacillus subtilis (strain 168).